Consider the following 348-residue polypeptide: tRNA (cytosine(34)-C(5))-methyltransferase, mitochondrial (348 aa).

S-adenosyl-L-methionine-binding positions include 139 to 145 (CAAPGGK), glutamate 162, aspartate 193, and aspartate 211. The Nucleophile role is filled by cysteine 265.

It belongs to the class I-like SAM-binding methyltransferase superfamily. RsmB/NOP family.

Its subcellular location is the mitochondrion matrix. It catalyses the reaction cytidine(34) in mitochondrial tRNA + S-adenosyl-L-methionine = 5-methylcytidine(34) in mitochondrial tRNA + S-adenosyl-L-homocysteine + H(+). Mitochondrial tRNA methyltransferase that mediates methylation of cytosine to 5-methylcytosine (m5C) at position 34 of mt-tRNA(Met). mt-tRNA(Met) methylation at cytosine(34) takes place at the wobble position of the anticodon and initiates the formation of 5-formylcytosine (f(5)c) at this position. mt-tRNA(Met) containing the f(5)c modification at the wobble position enables recognition of the AUA codon in addition to the AUG codon, expanding codon recognition in mitochondrial translation. This chain is tRNA (cytosine(34)-C(5))-methyltransferase, mitochondrial, found in Mus musculus (Mouse).